A 274-amino-acid chain; its full sequence is Putative ankyrin repeat protein R597 (274 aa).

4 ANK repeats span residues 78–112 (VGLP…NNND), 114–144 (PISE…SLKI), 146–174 (SRYH…DIQG), and 176–205 (NLSY…NIND).

The chain is Putative ankyrin repeat protein R597 from Acanthamoeba polyphaga mimivirus (APMV).